Consider the following 160-residue polypeptide: CXXC motif containing zinc binding protein (160 aa).

Residues cysteine 33, cysteine 36, cysteine 67, and cysteine 70 each coordinate Zn(2+). Serine 75 is subject to Phosphoserine.

This sequence belongs to the UPF0587 family. As to quaternary structure, monomer.

The sequence is that of CXXC motif containing zinc binding protein from Homo sapiens (Human).